The following is a 651-amino-acid chain: Acetyl-coenzyme A synthetase (651 aa).

CoA is bound by residues Arg189 to Lys192, Thr311, and Asn335. ATP-binding positions include Gly387 to Pro389, Asp411 to Thr416, Asp500, and Arg515. Residue Ser523 coordinates CoA. Arg526 contributes to the ATP binding site. Positions 537, 539, and 542 each coordinate Mg(2+). Residue Arg584 participates in CoA binding. Lys609 is subject to N6-acetyllysine.

Belongs to the ATP-dependent AMP-binding enzyme family. It depends on Mg(2+) as a cofactor. In terms of processing, acetylated. Deacetylation by the SIR2-homolog deacetylase activates the enzyme.

It carries out the reaction acetate + ATP + CoA = acetyl-CoA + AMP + diphosphate. Its function is as follows. Catalyzes the conversion of acetate into acetyl-CoA (AcCoA), an essential intermediate at the junction of anabolic and catabolic pathways. AcsA undergoes a two-step reaction. In the first half reaction, AcsA combines acetate with ATP to form acetyl-adenylate (AcAMP) intermediate. In the second half reaction, it can then transfer the acetyl group from AcAMP to the sulfhydryl group of CoA, forming the product AcCoA. The polypeptide is Acetyl-coenzyme A synthetase (Agrobacterium fabrum (strain C58 / ATCC 33970) (Agrobacterium tumefaciens (strain C58))).